A 127-amino-acid chain; its full sequence is MSAGQTYYEFYRGSRHVHIGTALTDALDELITQGDIPPQLAMRVLQQFDKSLTECLQKGVKNKTTIKGHLSTYRLCDDVWTFVVKDPQFKMEGVGAGSEMVTGSKIKIVACKSGDAADGKKAGGARE.

The protein belongs to the TFIIA subunit 2 family. TFIIA is a heterodimer composed of the large TOA1 and the small TOA2 subunits.

The protein localises to the nucleus. In terms of biological role, TFIIA is a component of the transcription machinery of RNA polymerase II and plays an important role in transcriptional activation. TFIIA in a complex with tbp mediates transcriptional activity. The protein is Transcription initiation factor IIA subunit 2 (TOA2) of Cryptococcus neoformans var. neoformans serotype D (strain B-3501A) (Filobasidiella neoformans).